The following is a 261-amino-acid chain: Small ribosomal subunit protein eS4z (261 aa).

Residues 42-104 enclose the S4 RNA-binding domain; it reads LPLVLIIRNR…TNENFRLLYD (63 aa).

The protein belongs to the eukaryotic ribosomal protein eS4 family.

The protein resides in the cytoplasm. The protein is Small ribosomal subunit protein eS4z (RPS4A) of Arabidopsis thaliana (Mouse-ear cress).